Reading from the N-terminus, the 418-residue chain is L-rhamnose isomerase (418 aa).

3 residues coordinate Mn(2+): H261, D293, and D295.

This sequence belongs to the rhamnose isomerase family. Mn(2+) is required as a cofactor.

It localises to the cytoplasm. It catalyses the reaction L-rhamnopyranose = L-rhamnulose. It functions in the pathway carbohydrate degradation; L-rhamnose degradation; glycerone phosphate from L-rhamnose: step 1/3. Its function is as follows. Catalyzes the interconversion of L-rhamnose and L-rhamnulose. The chain is L-rhamnose isomerase from Clostridium beijerinckii (strain ATCC 51743 / NCIMB 8052) (Clostridium acetobutylicum).